The chain runs to 617 residues: Dihydroxy-acid dehydratase (617 aa).

D81 contributes to the Mg(2+) binding site. C122 contributes to the [2Fe-2S] cluster binding site. Mg(2+) is bound by residues D123 and K124. At K124 the chain carries N6-carboxylysine. C195 contacts [2Fe-2S] cluster. E491 lines the Mg(2+) pocket. S517 serves as the catalytic Proton acceptor.

Belongs to the IlvD/Edd family. Homodimer. Requires [2Fe-2S] cluster as cofactor. Mg(2+) serves as cofactor.

The catalysed reaction is (2R)-2,3-dihydroxy-3-methylbutanoate = 3-methyl-2-oxobutanoate + H2O. The enzyme catalyses (2R,3R)-2,3-dihydroxy-3-methylpentanoate = (S)-3-methyl-2-oxopentanoate + H2O. The protein operates within amino-acid biosynthesis; L-isoleucine biosynthesis; L-isoleucine from 2-oxobutanoate: step 3/4. Its pathway is amino-acid biosynthesis; L-valine biosynthesis; L-valine from pyruvate: step 3/4. Functionally, functions in the biosynthesis of branched-chain amino acids. Catalyzes the dehydration of (2R,3R)-2,3-dihydroxy-3-methylpentanoate (2,3-dihydroxy-3-methylvalerate) into 2-oxo-3-methylpentanoate (2-oxo-3-methylvalerate) and of (2R)-2,3-dihydroxy-3-methylbutanoate (2,3-dihydroxyisovalerate) into 2-oxo-3-methylbutanoate (2-oxoisovalerate), the penultimate precursor to L-isoleucine and L-valine, respectively. In Nitrosococcus oceani (strain ATCC 19707 / BCRC 17464 / JCM 30415 / NCIMB 11848 / C-107), this protein is Dihydroxy-acid dehydratase.